Reading from the N-terminus, the 473-residue chain is Dihydrolipoyl dehydrogenase (473 aa).

Residues 36–45, K54, and A117 contribute to the FAD site; that span reads ERYDKLGGVC. C45 and C50 are joined by a disulfide. NAD(+) is bound by residues 182-186, D205, and 270-273; these read GSGII and AIGR. Positions 313 and 321 each coordinate FAD. Catalysis depends on H445, which acts as the Proton acceptor.

The protein belongs to the class-I pyridine nucleotide-disulfide oxidoreductase family. In terms of assembly, homodimer. FAD is required as a cofactor.

It localises to the cytoplasm. The catalysed reaction is N(6)-[(R)-dihydrolipoyl]-L-lysyl-[protein] + NAD(+) = N(6)-[(R)-lipoyl]-L-lysyl-[protein] + NADH + H(+). Its function is as follows. Lipoamide dehydrogenase is a component of the alpha-ketoacid dehydrogenase complexes. The polypeptide is Dihydrolipoyl dehydrogenase (lpdA) (Buchnera aphidicola subsp. Acyrthosiphon pisum (strain APS) (Acyrthosiphon pisum symbiotic bacterium)).